We begin with the raw amino-acid sequence, 284 residues long: P2R1A-PPP2R2A-interacting phosphatase regulator 1 (284 aa).

A disordered region spans residues 1-65 (MAQEKMELDL…RRNSTTFPSR (65 aa)). Over residues 20-29 (EGGGPGGGGL) the composition is skewed to gly residues. Ser32 bears the Phosphoserine mark. Ser34 is modified (phosphoserine; by CHEK1). 4 positions are modified to phosphoserine: Ser42, Ser45, Ser59, and Ser73. Lys86 is covalently cross-linked (Glycyl lysine isopeptide (Lys-Gly) (interchain with G-Cter in SUMO1)). A phosphoserine mark is found at Ser140 and Ser144. At Thr146 the chain carries Phosphothreonine. The tract at residues 164–185 (SNGLPPSPIPSPTTRFTTRRSQ) is disordered. Positions 175-185 (PTTRFTTRRSQ) are enriched in low complexity. Ser184 and Ser186 each carry phosphoserine. Positions 233-284 (GVCVSSDTLDGNSSSAGSSCNSPAKVSTTTDSPVSPAQAASPFIPVDELSSK) are disordered. Positions 243–254 (GNSSSAGSSCNS) are enriched in low complexity. Residues 256 to 267 (AKVSTTTDSPVS) are compositionally biased toward polar residues. Ser264, Ser267, and Ser273 each carry phosphoserine.

It belongs to the FAM122 family. As to quaternary structure, interacts with PPP2CA and PPP2R1A. Interacts (via its N-terminus) with PPP2R2A; the interaction is direct and this interaction inhibits PP2A activity. The CHEK1-mediated Ser-34 phosphorylated form interacts with 14-3-3 proteins. Post-translationally, CHEK1-mediated phosphorylation at Ser-34 negatively regulates its ability to inhibit serine/threonine-protein phosphatase 2A (PP2A) activity. Phosphorylation leads to its release from the PP2A complex and its sequestration by 14-3-3 proteins in the cytoplasm resulting in its inability to translocate to the nucleus, where it otherwise inhibits PP2A.

The protein localises to the nucleus. The protein resides in the cytoplasm. Its function is as follows. Acts as an inhibitor of serine/threonine-protein phosphatase 2A (PP2A) activity. Inhibits PP2A activity by blocking the substrate binding site on PPP2R2A and the active site of PPP2CA. Potentiates ubiquitin-mediated proteasomal degradation of serine/threonine-protein phosphatase 2A catalytic subunit alpha (PPP2CA). Inhibits PP2A-mediated dephosphorylation of WEE1, promoting ubiquitin-mediated proteolysis of WEE1, thereby releasing G2/M checkpoint. This chain is P2R1A-PPP2R2A-interacting phosphatase regulator 1, found in Mus musculus (Mouse).